We begin with the raw amino-acid sequence, 905 residues long: Protein translocase subunit SecA (905 aa).

ATP-binding positions include Gln-89, Gly-107–Thr-111, and Asp-502. 4 residues coordinate Zn(2+): Cys-889, Cys-891, Cys-900, and His-901.

It belongs to the SecA family. Monomer and homodimer. Part of the essential Sec protein translocation apparatus which comprises SecA, SecYEG and auxiliary proteins SecDF-YajC and YidC. Zn(2+) is required as a cofactor.

The protein localises to the cell inner membrane. It localises to the cytoplasm. It catalyses the reaction ATP + H2O + cellular proteinSide 1 = ADP + phosphate + cellular proteinSide 2.. Part of the Sec protein translocase complex. Interacts with the SecYEG preprotein conducting channel. Has a central role in coupling the hydrolysis of ATP to the transfer of proteins into and across the cell membrane, serving both as a receptor for the preprotein-SecB complex and as an ATP-driven molecular motor driving the stepwise translocation of polypeptide chains across the membrane. The chain is Protein translocase subunit SecA from Bartonella tribocorum (strain CIP 105476 / IBS 506).